Here is a 208-residue protein sequence, read N- to C-terminus: MKGLFVTIEGPEGSGKTTLIKSLLPYFEQKAQKVMATREPGGIAISEDIRTILHKQEYTMMEARTEALLYAAARRQHLVEKVMPALNEKYLVLCDRFIDSSLAYQGYARGLGMDKVFEINRFATEDCMPSLTIYLDIEPEVGLARIEKDAGREVNRLDMEDISFHKRVREGYLQVVERFSDRIVLVNADQPMEKLIEEVVQIIEDKLL.

10 to 17 (GPEGSGKT) contributes to the ATP binding site.

This sequence belongs to the thymidylate kinase family.

The enzyme catalyses dTMP + ATP = dTDP + ADP. Functionally, phosphorylation of dTMP to form dTDP in both de novo and salvage pathways of dTTP synthesis. This Bacillus cereus (strain B4264) protein is Thymidylate kinase.